The following is a 693-amino-acid chain: eEF1A lysine and N-terminal methyltransferase (693 aa).

This sequence belongs to the methyltransferase superfamily.

The catalysed reaction is L-lysyl-[protein] + S-adenosyl-L-methionine = N(6)-methyl-L-lysyl-[protein] + S-adenosyl-L-homocysteine + H(+). It carries out the reaction N(6)-methyl-L-lysyl-[protein] + S-adenosyl-L-methionine = N(6),N(6)-dimethyl-L-lysyl-[protein] + S-adenosyl-L-homocysteine + H(+). The enzyme catalyses N-terminal glycyl-L-lysyl-L-glutamyl-[protein] + 3 S-adenosyl-L-methionine = N-terminal N,N,N-trimethyl-glycyl-L-lysyl-L-glutamyl-[protein] + 3 S-adenosyl-L-homocysteine + 3 H(+). Functionally, dual methyltransferase that catalyzes methylation of elongation factor 1-alpha (eef1a1 and eef1a2) at two different positions, and is therefore involved in the regulation of mRNA translation. Via its C-terminus, methylates the N-terminus of eef1a1 and eef1a2. Via its N-terminus dimethylates lysine residues of eef1a1 and eef1a2. The polypeptide is eEF1A lysine and N-terminal methyltransferase (mettl13) (Xenopus laevis (African clawed frog)).